The chain runs to 249 residues: MAGHSHWAQIKHKKAKVDAQKGKLFGKLIREITVATKLGGPDPNANPRLRIAIEAARKVSMPMDTIEKAIKRGTGNDKEGALEEIVYEGYGPGGTAIMVVVATDNRNKATSEVRHAFSKHGGNLGSSGCVSYLFEQKGVIEIPKEATDEEKLMEAALEAGADDVESTEDMFIVYTNPKDVYTIKDILASKGFTIESAKTSLIPTTTVEIKDVDTAKKLLNLLEHLDELDEVQEVISNFEIDKDILAALG.

This sequence belongs to the TACO1 family.

It is found in the cytoplasm. The polypeptide is Probable transcriptional regulatory protein HY04AAS1_0501 (Hydrogenobaculum sp. (strain Y04AAS1)).